The sequence spans 753 residues: MMEERAAAAVAAAASSCRPLGSGAGPGPTGAAPVSAPAPGPGPAGKGGGGGGSPGPTAGPEPLSLPGILHFIQHEWARFEAEKARWEAERAELQAQVAFLQGERKGQENLKTDLVRRIKMLEYALKQERAKYHKLKFGTDLNQGEKKADVSEQVSNGPVESVTLENSPLVWKEGRQLLRQYLEEVGYTDTILDMRSKRVRSLLGRSLELNGAVEPSEGAPRAPPGPAGLSGGESLLVKQIEEQIKRNAAGKDGKERLGGSVLGQIPFLQNCEDEDSDEDDELDSVQHKKQRVKLPSKALVPEMEDEDEEDDSEDAINEFDFLGSGEDGEGAPDPRRCTVDGSPHELESRRVKLQGILADLRDVDGLPPKVTGPPPGTPQPRPHEDVFIMDTIGGGEVSLGDLADLTVTNDNDLSCDLSDSKDAFKKTWNPKFTLRSHYDGIRSLAFHHSQSALLTASEDGTLKLWNLQKAVTAKKNAALDVEPIHAFRAHRGPVLAVAMGSNSEYCYSGGADACIHSWKIPDLSMDPYDGYDPSVLSHVLEGHGDAVWGLAFSPTSQRLASCSADGTVRIWDPSSSSPACLCTFPTASEHGVPTSVAFTSTEPAHIVASFRSGDTVLYDMEVGSALLTLESRGSSGPTQINQVVSHPNQPLTITAHDDRGIRFLDNRTGKPVHSMVAHLDAVTCLAVDPNGAFLMSGSHDCSLRLWSLDNKTCVQEITAHRKKHEEAIHAVACHPSKALIASAGADALAKVFV.

Positions 10 to 65 (VAAAASSCRPLGSGAGPGPTGAAPVSAPAPGPGPAGKGGGGGGSPGPTAGPEPLSL) are disordered. The segment covering 43–54 (PAGKGGGGGGSP) has biased composition (gly residues). Serine 53 bears the Phosphoserine mark. Positions 69 to 136 (LHFIQHEWAR…QERAKYHKLK (68 aa)) form a coiled coil. A caveolin-binding region spans residues 71 to 79 (FIQHEWARF). A calmodulin-binding region spans residues 165–182 (ENSPLVWKEGRQLLRQYL). Serine 206 carries the post-translational modification Phosphoserine. Disordered stretches follow at residues 213–232 (VEPS…LSGG), 271–345 (CEDE…SPHE), and 363–382 (VDGL…QPRP). 2 stretches are compositionally biased toward acidic residues: residues 271–283 (CEDE…DELD) and 302–317 (EMED…DAIN). Phosphoserine is present on serine 276. Residues 332–345 (PDPRRCTVDGSPHE) show a composition bias toward basic and acidic residues. The span at 370-380 (VTGPPPGTPQP) shows a compositional bias: pro residues. WD repeat units lie at residues 436-475 (SHYD…TAKK), 489-528 (AHRG…MDPY), 542-581 (GHGD…PACL), 587-628 (ASEH…ALLT), 635-674 (SGPT…PVHS), 677-716 (AHLD…CVQE), and 723-753 (KHEE…KVFV).

It belongs to the WD repeat striatin family. As to quaternary structure, part of the core of STRIPAK complexes composed of PP2A catalytic and scaffolding subunits, the striatins (PP2A regulatory subunits), the striatin-associated proteins MOB4, STRIP1 and STRIP2, PDCD10 and members of the STE20 kinases, such as STK24 and STK26. Interacts with CTTNBP2NL.

Its subcellular location is the cytoplasm. Calmodulin-binding scaffolding protein which is the center of the striatin-interacting phosphatase and kinase (STRIPAK) complexes. STRIPAK complexes have critical roles in protein (de)phosphorylation and are regulators of multiple signaling pathways including Hippo, MAPK, nuclear receptor and cytoskeleton remodeling. Different types of STRIPAK complexes are involved in a variety of biological processes such as cell growth, differentiation, apoptosis, metabolism and immune regulation. Key regulator of the expanded Hippo signaling pathway by interacting and allowing the inhibition of MAP4K kinases by the STRIPAK complex. The polypeptide is Striatin-4 (Homo sapiens (Human)).